A 461-amino-acid polypeptide reads, in one-letter code: UDP-glycosyltransferase 82A1 (461 aa).

Residues S292, 349–351 (APQ), 366–374 (HCGWNSTME), and 388–391 (AGDQ) contribute to the UDP-alpha-D-glucose site.

The protein belongs to the UDP-glycosyltransferase family.

The sequence is that of UDP-glycosyltransferase 82A1 (UGT82A1) from Arabidopsis thaliana (Mouse-ear cress).